Reading from the N-terminus, the 420-residue chain is ATP phosphoribosyltransferase regulatory subunit (420 aa).

This sequence belongs to the class-II aminoacyl-tRNA synthetase family. HisZ subfamily. As to quaternary structure, heteromultimer composed of HisG and HisZ subunits.

Its subcellular location is the cytoplasm. Its pathway is amino-acid biosynthesis; L-histidine biosynthesis; L-histidine from 5-phospho-alpha-D-ribose 1-diphosphate: step 1/9. In terms of biological role, required for the first step of histidine biosynthesis. May allow the feedback regulation of ATP phosphoribosyltransferase activity by histidine. In Synechococcus sp. (strain ATCC 27144 / PCC 6301 / SAUG 1402/1) (Anacystis nidulans), this protein is ATP phosphoribosyltransferase regulatory subunit.